Consider the following 112-residue polypeptide: Large ribosomal subunit protein uL22 (112 aa).

Belongs to the universal ribosomal protein uL22 family. Part of the 50S ribosomal subunit.

In terms of biological role, this protein binds specifically to 23S rRNA; its binding is stimulated by other ribosomal proteins, e.g. L4, L17, and L20. It is important during the early stages of 50S assembly. It makes multiple contacts with different domains of the 23S rRNA in the assembled 50S subunit and ribosome. Its function is as follows. The globular domain of the protein is located near the polypeptide exit tunnel on the outside of the subunit, while an extended beta-hairpin is found that lines the wall of the exit tunnel in the center of the 70S ribosome. The protein is Large ribosomal subunit protein uL22 of Sulfurovum sp. (strain NBC37-1).